The following is a 552-amino-acid chain: Hydroxylamine reductase (552 aa).

The [2Fe-2S] cluster site is built by cysteine 5, cysteine 8, cysteine 20, and cysteine 27. Hybrid [4Fe-2O-2S] cluster-binding residues include histidine 251, glutamate 275, cysteine 319, cysteine 407, cysteine 435, cysteine 460, glutamate 494, and lysine 496. Position 407 is a cysteine persulfide (cysteine 407).

Belongs to the HCP family. The cofactor is [2Fe-2S] cluster. It depends on hybrid [4Fe-2O-2S] cluster as a cofactor.

Its subcellular location is the cytoplasm. The catalysed reaction is A + NH4(+) + H2O = hydroxylamine + AH2 + H(+). Its function is as follows. Catalyzes the reduction of hydroxylamine to form NH(3) and H(2)O. The sequence is that of Hydroxylamine reductase from Escherichia coli (strain UTI89 / UPEC).